The sequence spans 232 residues: Flagellar L-ring protein (232 aa).

The signal sequence occupies residues 1 to 21 (MQKYALHAYPVMALMVATLTG). Cysteine 22 carries N-palmitoyl cysteine lipidation. Cysteine 22 carries the S-diacylglycerol cysteine lipid modification.

This sequence belongs to the FlgH family. The basal body constitutes a major portion of the flagellar organelle and consists of four rings (L,P,S, and M) mounted on a central rod.

The protein resides in the cell outer membrane. It localises to the bacterial flagellum basal body. In terms of biological role, assembles around the rod to form the L-ring and probably protects the motor/basal body from shearing forces during rotation. The polypeptide is Flagellar L-ring protein (Salmonella choleraesuis (strain SC-B67)).